Consider the following 560-residue polypeptide: Interferon alpha/beta receptor 1 (560 aa).

An N-terminal signal peptide occupies residues 1 to 24; that stretch reads MLGLLGATTLMLVAGAPWVLPAGG. The Extracellular segment spans residues 25-437; the sequence is ADLRSPENVV…EKTKPGSTSQ (413 aa). Fibronectin type-III domains follow at residues 29 to 125, 133 to 224, 231 to 329, and 333 to 433; these read SPEN…FQEA, HLEA…INTT, SPEN…TEMQ, and FPPV…TKPG. N55 carries an N-linked (GlcNAc...) asparagine glycan. C76 and C84 form a disulfide bridge. N85, N108, and N172 each carry an N-linked (GlcNAc...) asparagine glycan. A disulfide bridge links C199 with C220. N-linked (GlcNAc...) asparagine glycans are attached at residues N222, N249, and N254. A disulfide bridge connects residues C283 and C291. Residues N313, N377, and N417 are each glycosylated (N-linked (GlcNAc...) asparagine). Residues C404 and C427 are joined by a disulfide bond. A helical membrane pass occupies residues 438-458; sequence AWLIAGILSAILLFPAVFYGV. The Cytoplasmic segment spans residues 459–560; the sequence is KVVSRCINYV…GEEILRQAAV (102 aa). Residue C464 is the site of S-palmitoyl cysteine attachment. Phosphotyrosine; by TYK2 occurs at positions 467 and 482. An important for interaction with TYK2 region spans residues 492 to 501; the sequence is LLSTSEEQTE. A phosphoserine mark is found at S496 and S536. The disordered stretch occupies residues 520–560; the sequence is QIDDNHSRCSSQTNRDSGVYSNEDENSGSKIGEEILRQAAV. A compositionally biased stretch (polar residues) spans 527-539; that stretch reads RCSSQTNRDSGVY. A compositionally biased stretch (basic and acidic residues) spans 550–560; that stretch reads IGEEILRQAAV.

The protein belongs to the type II cytokine receptor family. In terms of assembly, heterodimer with IFNAR2; forming the receptor for type I interferon. Interacts with TYK2. Interacts with STAT1 and STAT2; the interaction requires its phosphorylation at Tyr-482. Interacts (serine-phosphorylated form) with FBXW11, the substrate recognition component of a SCF (SKP1-CUL1-F-box protein) E3 ubiquitin-protein ligase complex. Interacts with SHMT2; this promotes interaction with ABRAXAS2 and the BRISC complex. Interacts with TRIM10; this interaction prevents association between IFNAR1 and TYK2. Ubiquitinated, leading to its internalization and degradation. Polyubiquitinated via 'Lys-48'-linked and 'Lys-63'-linked ubiquitin chains, leading to receptor internalization and lysosomal degradation. The 'Lys-63'-linked ubiquitin chains are cleaved off by the BRISC complex. In terms of processing, phosphorylated on tyrosine residues in response to interferon-binding: phosphorylation by TYK2 tyrosine kinase creates docking sites for STAT proteins. Phosphorylated on serine residues in response to interferon binding; this promotes interaction with FBXW11 and ubiquitination. Post-translationally, palmitoylation at Cys-464 is required for the activation of STAT1 and STAT2.

It is found in the cell membrane. The protein resides in the late endosome. Its subcellular location is the lysosome. Its function is as follows. Together with IFNAR2, forms the heterodimeric receptor for type I interferons (including interferons alpha, beta, epsilon, omega and kappa). Type I interferon binding activates the JAK-STAT signaling cascade, resulting in transcriptional activation or repression of interferon-regulated genes that encode the effectors of the interferon response. Mechanistically, type I interferon-binding brings the IFNAR1 and IFNAR2 subunits into close proximity with one another, driving their associated Janus kinases (JAKs) (TYK2 bound to IFNAR1 and JAK1 bound to IFNAR2) to cross-phosphorylate one another. The activated kinases phosphorylate specific tyrosine residues on the intracellular domains of IFNAR1 and IFNAR2, forming docking sites for the STAT transcription factors. STAT proteins are then phosphorylated by the JAKs, promoting their translocation into the nucleus to regulate expression of interferon-regulated genes. Can also act independently of IFNAR2: form an active IFNB1 receptor by itself and activate a signaling cascade that does not involve activation of the JAK-STAT pathway. This Sus scrofa (Pig) protein is Interferon alpha/beta receptor 1 (IFNAR1).